The primary structure comprises 130 residues: Lipoprotein LpqS (130 aa).

Residues 1-23 form the signal peptide; the sequence is MVWMRSAIVAVALGVTVAAVAAA. Cys-24 carries N-palmitoyl cysteine lipidation. Cys-24 carries the S-diacylglycerol cysteine lipid modification.

The protein resides in the cell membrane. May play an essential role in M.tuberculosis replication and survival inside the host cell. This is Lipoprotein LpqS from Mycobacterium tuberculosis (strain ATCC 25618 / H37Rv).